The following is a 700-amino-acid chain: E3 ubiquitin-protein ligase SspH1 (700 aa).

The interaction with target proteins stretch occupies residues 1–395 (MFNIRNTQPS…HSGIRIHFDM (395 aa)). 8 LRR repeats span residues 217–238 (HITT…PEGL), 239–257 (RELE…SLPQ), 258–279 (GLQK…PPGL), 280–297 (GDLA…EMPP), 298–319 (ALRE…PSGL), 320–337 (QKLW…EMSP), 338–360 (GLQE…TGLS), and 361–381 (SAAR…QALR). The linker stretch occupies residues 396 to 403 (AGPSVPRE). The tract at residues 404 to 700 (ARALHLAVAD…SYLTARWRLN (297 aa)) is E3 ubiquitin-protein ligase catalytic domain. The region spanning 406-700 (ALHLAVADWL…SYLTARWRLN (295 aa)) is the NEL domain. The Glycyl thioester intermediate role is filled by Cys-492.

This sequence belongs to the LRR-containing bacterial E3 ligase family. Interacts (via leucine-rich repeat region) with host PKN1 (via the second REM repeat). Ubiquitinated in the presence of host E1 ubiquitin-activating enzyme, E2 ubiquitin-conjugating enzyme and ubiquitin.

The protein resides in the secreted. Its subcellular location is the host cytoplasm. It localises to the host nucleus. It carries out the reaction S-ubiquitinyl-[E2 ubiquitin-conjugating enzyme]-L-cysteine + [acceptor protein]-L-lysine = [E2 ubiquitin-conjugating enzyme]-L-cysteine + N(6)-ubiquitinyl-[acceptor protein]-L-lysine.. With respect to regulation, exists in an autoinhibited state in the absence of substrate protein, due to interactions of the leucine-rich repeat domain with the catalytic domain. Is activated upon binding to a substrate protein. Effector proteins function to alter host cell physiology and promote bacterial survival in host tissues. This protein is an E3 ubiquitin-protein ligase that interferes with the host's ubiquitination pathway and targets host proteins for proteasomal degradation. Can ubiquitinate ubiquitin, giving rise to polyubiquitin chains (in vitro). Polyubiquitinates host PKN1, leading to its proteasomal degradation. Down-modulates production of host pro-inflammatory cytokines by inhibiting NF-kappa-B-dependent gene expression; this depends only partially on its E3 ubiquitin-protein ligase activity. This is E3 ubiquitin-protein ligase SspH1 (sspH1) from Salmonella typhimurium (strain 14028s / SGSC 2262).